We begin with the raw amino-acid sequence, 230 residues long: 2,3-bisphosphoglycerate-dependent phosphoglycerate mutase (230 aa).

Substrate contacts are provided by residues 8-15 (RHGQSEWN), 21-22 (TG), Arg-60, 87-90 (ERHY), Lys-98, 114-115 (RR), and 183-184 (GN). His-9 acts as the Tele-phosphohistidine intermediate in catalysis. Glu-87 (proton donor/acceptor) is an active-site residue.

Belongs to the phosphoglycerate mutase family. BPG-dependent PGAM subfamily.

It carries out the reaction (2R)-2-phosphoglycerate = (2R)-3-phosphoglycerate. Its pathway is carbohydrate degradation; glycolysis; pyruvate from D-glyceraldehyde 3-phosphate: step 3/5. Catalyzes the interconversion of 2-phosphoglycerate and 3-phosphoglycerate. The sequence is that of 2,3-bisphosphoglycerate-dependent phosphoglycerate mutase from Lactobacillus acidophilus (strain ATCC 700396 / NCK56 / N2 / NCFM).